We begin with the raw amino-acid sequence, 494 residues long: Probable malate:quinone oxidoreductase 3 (494 aa).

It belongs to the MQO family. FAD serves as cofactor.

It carries out the reaction (S)-malate + a quinone = a quinol + oxaloacetate. It participates in carbohydrate metabolism; tricarboxylic acid cycle; oxaloacetate from (S)-malate (quinone route): step 1/1. This chain is Probable malate:quinone oxidoreductase 3, found in Staphylococcus epidermidis (strain ATCC 35984 / DSM 28319 / BCRC 17069 / CCUG 31568 / BM 3577 / RP62A).